The chain runs to 130 residues: Histidine triad nucleotide-binding protein 1 (130 aa).

The HIT domain maps to 22–130; it reads LFGKIIRKEI…GGRQLQWPPG (109 aa). The short motif at 114–118 is the Histidine triad motif element; it reads HLHLH.

The protein is Histidine triad nucleotide-binding protein 1 (hint-1) of Caenorhabditis elegans.